A 161-amino-acid polypeptide reads, in one-letter code: Urease accessory protein UreE (161 aa).

The interval 138-161 is disordered; it reads RGAYHAHGGHSHDHGQGHHHHDHG.

It belongs to the UreE family.

It is found in the cytoplasm. In terms of biological role, involved in urease metallocenter assembly. Binds nickel. Probably functions as a nickel donor during metallocenter assembly. In Agrobacterium fabrum (strain C58 / ATCC 33970) (Agrobacterium tumefaciens (strain C58)), this protein is Urease accessory protein UreE.